The following is a 607-amino-acid chain: Elongation factor 4 (607 aa).

Residues 11–193 (GKIRNFSIIA…QIVEKVPAPT (183 aa)) enclose the tr-type G domain. Residues 23–28 (DHGKST) and 140–143 (NKID) contribute to the GTP site.

It belongs to the TRAFAC class translation factor GTPase superfamily. Classic translation factor GTPase family. LepA subfamily.

It localises to the cell membrane. The enzyme catalyses GTP + H2O = GDP + phosphate + H(+). Functionally, required for accurate and efficient protein synthesis under certain stress conditions. May act as a fidelity factor of the translation reaction, by catalyzing a one-codon backward translocation of tRNAs on improperly translocated ribosomes. Back-translocation proceeds from a post-translocation (POST) complex to a pre-translocation (PRE) complex, thus giving elongation factor G a second chance to translocate the tRNAs correctly. Binds to ribosomes in a GTP-dependent manner. The protein is Elongation factor 4 of Streptococcus pneumoniae (strain Taiwan19F-14).